A 239-amino-acid polypeptide reads, in one-letter code: Small ribosomal subunit protein eS4 (239 aa).

The S4 RNA-binding domain maps to 37 to 99; sequence IPLAVVIRDY…ADLYFRVIPD (63 aa).

The protein belongs to the eukaryotic ribosomal protein eS4 family.

In Saccharolobus islandicus (strain Y.N.15.51 / Yellowstone #2) (Sulfolobus islandicus), this protein is Small ribosomal subunit protein eS4.